A 392-amino-acid polypeptide reads, in one-letter code: Obg-like ATPase 1 (392 aa).

The region spanning 21 to 285 is the OBG-type G domain; it reads LKTGIVGMPN…FTEEEAIEEC (265 aa). An ATP-binding site is contributed by 30 to 35; it reads NVGKST. Residues Ser-34 and Thr-55 each coordinate Mg(2+). Met-233 provides a ligand contact to ATP. The TGS domain maps to 306-389; it reads NLINYFTCGE…ESGDIAHWKA (84 aa).

It belongs to the TRAFAC class OBG-HflX-like GTPase superfamily. OBG GTPase family. YchF/OLA1 subfamily. As to quaternary structure, monomer. Mg(2+) serves as cofactor.

The protein localises to the cytoplasm. Its subcellular location is the nucleus. Its function is as follows. Hydrolyzes ATP, and can also hydrolyze GTP with lower efficiency. Has lower affinity for GTP. Negatively regulates the G2/M transition in the cell cycle. The protein is Obg-like ATPase 1 of Schizosaccharomyces pombe (strain 972 / ATCC 24843) (Fission yeast).